A 707-amino-acid chain; its full sequence is Ribosomal RNA large subunit methyltransferase K/L (707 aa).

Residues 44-155 (VIYNLCLWSR…NDILTVSFDL (112 aa)) enclose the THUMP domain.

The protein belongs to the methyltransferase superfamily. RlmKL family.

The protein localises to the cytoplasm. The enzyme catalyses guanosine(2445) in 23S rRNA + S-adenosyl-L-methionine = N(2)-methylguanosine(2445) in 23S rRNA + S-adenosyl-L-homocysteine + H(+). The catalysed reaction is guanosine(2069) in 23S rRNA + S-adenosyl-L-methionine = N(2)-methylguanosine(2069) in 23S rRNA + S-adenosyl-L-homocysteine + H(+). Its function is as follows. Specifically methylates the guanine in position 2445 (m2G2445) and the guanine in position 2069 (m7G2069) of 23S rRNA. The polypeptide is Ribosomal RNA large subunit methyltransferase K/L (Legionella pneumophila (strain Lens)).